Consider the following 302-residue polypeptide: tRNA-cytidine(32) 2-sulfurtransferase (302 aa).

Positions 45–50 (SGGKDS) match the PP-loop motif motif. [4Fe-4S] cluster contacts are provided by cysteine 120, cysteine 123, and cysteine 211.

This sequence belongs to the TtcA family. In terms of assembly, homodimer. Mg(2+) is required as a cofactor. [4Fe-4S] cluster serves as cofactor.

It localises to the cytoplasm. It carries out the reaction cytidine(32) in tRNA + S-sulfanyl-L-cysteinyl-[cysteine desulfurase] + AH2 + ATP = 2-thiocytidine(32) in tRNA + L-cysteinyl-[cysteine desulfurase] + A + AMP + diphosphate + H(+). The protein operates within tRNA modification. Its function is as follows. Catalyzes the ATP-dependent 2-thiolation of cytidine in position 32 of tRNA, to form 2-thiocytidine (s(2)C32). The sulfur atoms are provided by the cysteine/cysteine desulfurase (IscS) system. The polypeptide is tRNA-cytidine(32) 2-sulfurtransferase (Aeromonas hydrophila subsp. hydrophila (strain ATCC 7966 / DSM 30187 / BCRC 13018 / CCUG 14551 / JCM 1027 / KCTC 2358 / NCIMB 9240 / NCTC 8049)).